A 997-amino-acid chain; its full sequence is MENAHTKTVEEVLGYFGVNESTGLSLEQVKKLKERWGSNELPAEEGKTLLELVIEQFEDLLVRILLLAACISFVLAWFEEGEETITAFVEPFVILLILVANAIVGVWQERNAENAIEALKEYEPEMGKVYRQDRKSVQRIKAKDIVPGDIVEIAVGDKVPADIRLTSIKSTTLRVDQSILTGESVSVIKHTDPVPDPRAVNQDKKNMLFSGTNIAAGKAMGVVVATGVNTEIGKIRDEMVATEQERTPLQQKLDEFGEQLSKVISLICIAVWIINIGHFNDPVHGGSWIRGAIYYFKIAVALAVAAIPEGLPAVITTCLALGTRRMAKKNAIVRSLPSVETLGCTSVICSDKTGTLTTNQMSVCRMFILDKVEGDTCSLNEFTITGSTYAPIGEVHKDDKPVKCHQYDGLVELATICALCNDSALDYNEAKGVYKKFGEATETALTCLVEKMNVFDTELKGLSKIERANACNSVIKQLMKKEFTLEFSRDRKSMSVYCTPNKPSRTSMSKMFVKGAPEGVIDRCTHIRVGSTKVPMTPGVKQKVMSVIREWGSGSDTLRCLALATHDNPLRREEMNLEDSANFIKYETNLTFVGCVGMLDPPRIEVASSVKLCRQAGIRVIMITGDNKGTAVAICRRIGIFGQDEDVTSKAFTGREFDELSPSAQRDACLNARCFARVEPSHKSKIVEFLQSFDEITAMTGDGVNDAPALKKSEIGIAMGSGTAVAKTASEMVLADDNFSTIVAAVEEGRAIYNNMKQFIRYLISSNVGEVVCIFLTAALGFPEALIPVQLLWVNLVTDGLPATALGFNPPDLDIMNKPPRNPKEPLISGWLFFRYLAIGCYVGAATVGAAAWWFIAADGGPRVSFYQLSHFLQCKDDNPDFEGVDCAIFESPYPMTMALSVLVTIEMCNALNSLSENQSLLRMPPWENIWLVGSICLSMSLHFLILYVEPLPLIFQITPLNLTQWLMVLKISLPVILMDETLKFVARNYLEPAILE.

At 1–48 the chain is on the cytoplasmic side; the sequence is MENAHTKTVEEVLGYFGVNESTGLSLEQVKKLKERWGSNELPAEEGKT. The residue at position 38 (Ser38) is a Phosphoserine. Residues 49 to 69 form a helical membrane-spanning segment; the sequence is LLELVIEQFEDLLVRILLLAA. At 70 to 89 the chain is on the lumenal side; the sequence is CISFVLAWFEEGEETITAFV. A helical transmembrane segment spans residues 90–110; it reads EPFVILLILVANAIVGVWQER. The Cytoplasmic portion of the chain corresponds to 111-253; that stretch reads NAENAIEALK…QERTPLQQKL (143 aa). The helical transmembrane segment at 254–273 threads the bilayer; the sequence is DEFGEQLSKVISLICIAVWI. The Lumenal portion of the chain corresponds to 274 to 295; that stretch reads INIGHFNDPVHGGSWIRGAIYY. Residues Tyr294 and Tyr295 each carry the 3'-nitrotyrosine modification. The chain crosses the membrane as a helical span at residues 296–313; that stretch reads FKIAVALAVAAIPEGLPA. The Ca(2+) site is built by Val304, Ala305, Ile307, and Glu309. At 314–756 the chain is on the cytoplasmic side; it reads VITTCLALGT…EEGRAIYNNM (443 aa). The active-site 4-aspartylphosphate intermediate is Asp351. 2 residues coordinate Mg(2+): Asp351 and Thr353. Residue Thr353 coordinates ATP. Thr441 is modified (phosphothreonine). The ATP site is built by Glu442, Arg489, and Lys514. Ser531 carries the post-translational modification Phosphoserine. Arg559 lines the ATP pocket. The interaction with HAX1 stretch occupies residues 575–594; it reads MNLEDSANFIKYETNLTFVG. Ser580 carries the post-translational modification Phosphoserine. 3 residues coordinate ATP: Thr624, Gly625, and Asp626. A phosphoserine mark is found at Ser661 and Ser663. ATP contacts are provided by Arg677 and Lys683. A Mg(2+)-binding site is contributed by Asp702. Asn705 provides a ligand contact to ATP. A helical transmembrane segment spans residues 757 to 776; that stretch reads KQFIRYLISSNVGEVVCIFL. Asn767 and Glu770 together coordinate Ca(2+). The Lumenal portion of the chain corresponds to 777-786; that stretch reads TAALGFPEAL. The helical transmembrane segment at 787-807 threads the bilayer; it reads IPVQLLWVNLVTDGLPATALG. Residues 787–807 are interaction with PLN; that stretch reads IPVQLLWVNLVTDGLPATALG. The tract at residues 788-997 is interaction with TMEM64 and PDIA3; it reads PVQLLWVNLV…RNYLEPAILE (210 aa). 3 residues coordinate Ca(2+): Asn795, Thr798, and Asp799. Topologically, residues 808 to 827 are cytoplasmic; it reads FNPPDLDIMNKPPRNPKEPL. The helical transmembrane segment at 828–850 threads the bilayer; the sequence is ISGWLFFRYLAIGCYVGAATVGA. Residues 851–896 lie on the Lumenal side of the membrane; the sequence is AAWWFIAADGGPRVSFYQLSHFLQCKDDNPDFEGVDCAIFESPYPM. Cys875 and Cys887 are joined by a disulfide. A helical transmembrane segment spans residues 897-916; the sequence is TMALSVLVTIEMCNALNSLS. Residue Glu907 participates in Ca(2+) binding. Residues 917-929 are Cytoplasmic-facing; that stretch reads ENQSLLRMPPWEN. Residues 930–948 traverse the membrane as a helical segment; sequence IWLVGSICLSMSLHFLILY. The interval 931–942 is interaction with PLN; it reads WLVGSICLSMSL. The Lumenal segment spans residues 949 to 963; the sequence is VEPLPLIFQITPLNL. Residues 964-984 traverse the membrane as a helical segment; sequence TQWLMVLKISLPVILMDETLK. The Cytoplasmic segment spans residues 985-997; sequence FVARNYLEPAILE.

Belongs to the cation transport ATPase (P-type) (TC 3.A.3) family. Type IIA subfamily. As to quaternary structure, interacts with sarcolipin (SLN); the interaction inhibits ATP2A2 Ca(2+) affinity. Interacts with phospholamban (PLN); the interaction inhibits ATP2A2 Ca(2+) affinity. Interacts with myoregulin (MRLN). Interacts with ARLN and ERLN; the interactions inhibit ATP2A2 Ca(2+) affinity. Interacts with STRIT1/DWORF; the interaction results in activation of ATP2A2. Interacts with the monomeric forms of SLN, PLN, ARLN, ERLN and STRI1/DWORF. Interacts with HAX1. Interacts with S100A8 and S100A9. Interacts with SLC35G1 and STIM1. Interacts with TMEM203. Interacts with TMEM64 and PDIA3. Interacts with TMX1. Interacts with TMX2. Interacts with VMP1; VMP1 competes with PLN and SLN to prevent them from forming an inhibitory complex with ATP2A2. Interacts with ULK1. Interacts with S100A1 in a Ca(2+)-dependent manner. Interacts with TUNAR. Interacts with FLVCR2; this interaction occurs in the absence of heme and promotes ATP2A2 proteasomal degradation; this complex is dissociated upon heme binding. Interacts with FNIP1. Interacts with TRAM2 (via C-terminus). Mg(2+) is required as a cofactor. Post-translationally, nitrated under oxidative stress. Nitration on the two tyrosine residues inhibits catalytic activity. In terms of processing, serotonylated on Gln residues by TGM2 in response to hypoxia, leading to its inactivation. In terms of tissue distribution, isoform 1 is expressed in the heart.

The protein resides in the endoplasmic reticulum membrane. Its subcellular location is the sarcoplasmic reticulum membrane. The enzyme catalyses Ca(2+)(in) + ATP + H2O = Ca(2+)(out) + ADP + phosphate + H(+). With respect to regulation, has different conformational states with differential Ca2+ affinity. The E1 conformational state (active form) shows high Ca(2+) affinity, while the E2 state exhibits low Ca(2+) affinity. Binding of ATP allosterically increases its affinity for subsequent binding of Ca2+. Reversibly inhibited by phospholamban (PLN) at low calcium concentrations. PLN inhibits ATP2A2 Ca(2+) affinity by disrupting its allosteric activation by ATP. Inhibited by sarcolipin (SLN) and myoregulin (MRLN). The inhibition is blocked by VMP1. Enhanced by STRIT1/DWORF; STRIT1 increases activity by displacing sarcolipin (SLN), phospholamban (PLN) and myoregulin (MRLN). Stabilizes SERCA2 in its E2 state. In terms of biological role, this magnesium-dependent enzyme catalyzes the hydrolysis of ATP coupled with the translocation of calcium from the cytosol to the sarcoplasmic reticulum lumen. Involved in autophagy in response to starvation. Upon interaction with VMP1 and activation, controls ER-isolation membrane contacts for autophagosome formation. Also modulates ER contacts with lipid droplets, mitochondria and endosomes. In coordination with FLVCR2 mediates heme-stimulated switching from mitochondrial ATP synthesis to thermogenesis. Its function is as follows. Involved in the regulation of the contraction/relaxation cycle. Acts as a regulator of TNFSF11-mediated Ca(2+) signaling pathways via its interaction with TMEM64 which is critical for the TNFSF11-induced CREB1 activation and mitochondrial ROS generation necessary for proper osteoclast generation. Association between TMEM64 and SERCA2 in the ER leads to cytosolic Ca(2+) spiking for activation of NFATC1 and production of mitochondrial ROS, thereby triggering Ca(2+) signaling cascades that promote osteoclast differentiation and activation. The protein is Sarcoplasmic/endoplasmic reticulum calcium ATPase 2 (ATP2A2) of Felis catus (Cat).